A 402-amino-acid polypeptide reads, in one-letter code: MEGLKTLGPCGHPHPQCPPTPASSSHGGGLDQPCQGFVGWPCLGPISSAHSVQSQRPFPVPGAGGSGPTVEGEAPGLFLSSQEQRARDTEGPRQGDLEAGLGWGWPLHPGSNQGAPRQGGSIGSGTRPCPCPPLSREGGALASPRVALSQLQCGLLGSAEQSFLQLEQENHSLKRQNQELREQLGALLGPGQQFLPLCPEHSSCTALAWPPDPAGTQPLGNRAPLQLLRRELCQGQEAFVQQSQNELQQIRLCFERKKMVITEVWDNVAEMHMALNNQATGLLNLKKDIRGVLDQMEDIQLEILRERAQCRTRARKEKQMASMSKGRPKLGSSKGLAGQLWLLTLRLLLGALLVWTAAYVYVVNPTPFEGLVPPLLSRATVWKLRALLDPFLRLKVDGFLPF.

Disordered regions lie at residues 1 to 30, 50 to 74, and 108 to 131; these read MEGLKTLGPCGHPHPQCPPTPASSSHGGGL, HSVQSQRPFPVPGAGGSGPTVEGEA, and HPGSNQGAPRQGGSIGSGTRPCPC. A coiled-coil region spans residues 154 to 189; that stretch reads GLLGSAEQSFLQLEQENHSLKRQNQELREQLGALLG. Residues 347–363 traverse the membrane as a helical segment; that stretch reads LLLGALLVWTAAYVYVV.

It is found in the membrane. The polypeptide is Coiled-coil domain-containing protein 188 (Homo sapiens (Human)).